The primary structure comprises 185 residues: DAN domain family member 5 (185 aa).

The signal sequence occupies residues 1 to 23 (MFRSQFTTLLGLFSGAWLPTGSG). N39 carries N-linked (GlcNAc...) asparagine glycosylation. Cystine bridges form between C97–C144, C111–C158, C121–C179, and C125–C181. One can recognise a CTCK domain in the interval 97-182 (CKALSFVQVI…TVLVQKCQCR (86 aa)).

Belongs to the DAN family. As to expression, expressed throughout the neural retina and in the photoreceptor nuclear layer. In the retina, widely expressed in inner nuclear layer, as well as in the ganglion cell layer.

It localises to the secreted. Functionally, antagonist of the extracellular signaling protein NODAL, which is required for correct left-right patterning during embryonic development. Antagonist of BMP4 signaling. Antagonist of TGF-beta signaling. Independently of its role in left-right axis establishment, plays a role during heart development, possibly through the regulation of TGF-beta/Nodal signaling pathway. Displays anti-angiogenic activity by inhibiting endothelial sprouting, migration, and proliferation. Once internalized by endothelial cells, may alter their redox and glycolytic balance. The sequence is that of DAN domain family member 5 (Dand5) from Mus musculus (Mouse).